A 580-amino-acid polypeptide reads, in one-letter code: Thymidine kinase (580 aa).

Disordered regions lie at residues 1–60 (MAEG…KSVK) and 133–157 (VCGR…ASMG). The span at 137-149 (PPLPPPNHPPPAT) shows a compositional bias: pro residues. Position 260 to 267 (260 to 267 (GVMGVGKS)) interacts with ATP. The active-site Proton acceptor is the Glu-287. Gln-325 contacts substrate. An ATP-binding site is contributed by Arg-415. A substrate-binding site is contributed by Arg-421.

The protein belongs to the herpesviridae thymidine kinase family. In terms of assembly, homodimer.

It carries out the reaction thymidine + ATP = dTMP + ADP + H(+). Catalyzes the transfer of the gamma-phospho group of ATP to thymidine to generate dTMP in the salvage pathway of pyrimidine synthesis. The dTMP serves as a substrate for DNA polymerase during viral DNA replication. Allows the virus to be reactivated and to grow in non-proliferative cells lacking a high concentration of phosphorylated nucleic acid precursors. This is Thymidine kinase from Human herpesvirus 8 type P (isolate GK18) (HHV-8).